Here is a 156-residue protein sequence, read N- to C-terminus: Small ribosomal subunit protein uS7 (156 aa).

This sequence belongs to the universal ribosomal protein uS7 family. In terms of assembly, part of the 30S ribosomal subunit. Contacts proteins S9 and S11.

One of the primary rRNA binding proteins, it binds directly to 16S rRNA where it nucleates assembly of the head domain of the 30S subunit. Is located at the subunit interface close to the decoding center, probably blocks exit of the E-site tRNA. The sequence is that of Small ribosomal subunit protein uS7 from Thermodesulfovibrio yellowstonii (strain ATCC 51303 / DSM 11347 / YP87).